Here is a 352-residue protein sequence, read N- to C-terminus: Peptide chain release factor 1 (352 aa).

Gln233 is subject to N5-methylglutamine. The disordered stretch occupies residues Asn288–Asn309. The span at Ala289 to Arg306 shows a compositional bias: basic and acidic residues.

Belongs to the prokaryotic/mitochondrial release factor family. Methylated by PrmC. Methylation increases the termination efficiency of RF1.

It localises to the cytoplasm. Functionally, peptide chain release factor 1 directs the termination of translation in response to the peptide chain termination codons UAG and UAA. In Helicobacter pylori (strain ATCC 700392 / 26695) (Campylobacter pylori), this protein is Peptide chain release factor 1 (prfA).